Reading from the N-terminus, the 294-residue chain is NAD kinase (294 aa).

D72 serves as the catalytic Proton acceptor. Residues 72–73 (DG), 146–147 (ND), R157, R174, D176, 187–192 (TAYSLS), and Q247 contribute to the NAD(+) site.

This sequence belongs to the NAD kinase family. The cofactor is a divalent metal cation.

It localises to the cytoplasm. It carries out the reaction NAD(+) + ATP = ADP + NADP(+) + H(+). Its function is as follows. Involved in the regulation of the intracellular balance of NAD and NADP, and is a key enzyme in the biosynthesis of NADP. Catalyzes specifically the phosphorylation on 2'-hydroxyl of the adenosine moiety of NAD to yield NADP. The sequence is that of NAD kinase from Marinobacter nauticus (strain ATCC 700491 / DSM 11845 / VT8) (Marinobacter aquaeolei).